A 1051-amino-acid chain; its full sequence is Carbamoyl phosphate synthase large chain (1051 aa).

The carboxyphosphate synthetic domain stretch occupies residues 1–399 (MRETPKKVLV…SLQKAIRMLD (399 aa)). Residues Arg-127, Arg-167, Gly-173, Gly-174, Lys-206, Leu-208, Glu-213, Gly-239, Val-240, His-241, Gln-282, and Glu-296 each coordinate ATP. The ATP-grasp 1 domain occupies 131-325 (RETMIENNLP…LAYVSAKLAL (195 aa)). Gln-282, Glu-296, and Asn-298 together coordinate Mg(2+). Mn(2+)-binding residues include Gln-282, Glu-296, and Asn-298. The tract at residues 400-548 (IGEPGVVGGK…LTYNGTEDDI (149 aa)) is oligomerization domain. The carbamoyl phosphate synthetic domain stretch occupies residues 549–930 (EFSQGNKLLI…LKSWLSSMPN (382 aa)). Residues 673–863 (SKLLDKLGIS…LINESMKAIF (191 aa)) form the ATP-grasp 2 domain. ATP-binding residues include Arg-709, Lys-748, Ile-750, Glu-755, Gly-779, Val-780, His-781, Ser-782, Gln-822, and Glu-834. Gln-822, Glu-834, and Asn-836 together coordinate Mg(2+). Residues Gln-822, Glu-834, and Asn-836 each contribute to the Mn(2+) site. In terms of domain architecture, MGS-like spans 930–1051 (NRIPNKNGIA…FEISEYGGGI (122 aa)). The tract at residues 931–1051 (RIPNKNGIAL…FEISEYGGGI (121 aa)) is allosteric domain.

The protein belongs to the CarB family. In terms of assembly, composed of two chains; the small (or glutamine) chain promotes the hydrolysis of glutamine to ammonia, which is used by the large (or ammonia) chain to synthesize carbamoyl phosphate. Tetramer of heterodimers (alpha,beta)4. It depends on Mg(2+) as a cofactor. The cofactor is Mn(2+).

It carries out the reaction hydrogencarbonate + L-glutamine + 2 ATP + H2O = carbamoyl phosphate + L-glutamate + 2 ADP + phosphate + 2 H(+). The catalysed reaction is hydrogencarbonate + NH4(+) + 2 ATP = carbamoyl phosphate + 2 ADP + phosphate + 2 H(+). Its pathway is amino-acid biosynthesis; L-arginine biosynthesis; carbamoyl phosphate from bicarbonate: step 1/1. It functions in the pathway pyrimidine metabolism; UMP biosynthesis via de novo pathway; (S)-dihydroorotate from bicarbonate: step 1/3. In terms of biological role, large subunit of the glutamine-dependent carbamoyl phosphate synthetase (CPSase). CPSase catalyzes the formation of carbamoyl phosphate from the ammonia moiety of glutamine, carbonate, and phosphate donated by ATP, constituting the first step of 2 biosynthetic pathways, one leading to arginine and/or urea and the other to pyrimidine nucleotides. The large subunit (synthetase) binds the substrates ammonia (free or transferred from glutamine from the small subunit), hydrogencarbonate and ATP and carries out an ATP-coupled ligase reaction, activating hydrogencarbonate by forming carboxy phosphate which reacts with ammonia to form carbamoyl phosphate. The polypeptide is Carbamoyl phosphate synthase large chain (Saccharolobus solfataricus (strain ATCC 35092 / DSM 1617 / JCM 11322 / P2) (Sulfolobus solfataricus)).